A 418-amino-acid chain; its full sequence is Deubiquitinase and deneddylase Dub1 (418 aa).

Polar residues predominate over residues 1–10 (MLSPTNSISK). The interval 1–23 (MLSPTNSISKTVPAPPQDSSKPV) is disordered. The chain crosses the membrane as a helical span at residues 40–60 (TALAVLLVVVTLGLILLFYSF). Positions 75–145 (STKEHPTISI…LPPKAPKPVK (71 aa)) are disordered. The span at 86–141 (EPLPSPPLAVPRPSTPPPPVISRPSTPPAPTPAISPPSTPSAPKPSTPPPLPPKAP) shows a compositional bias: pro residues. Active-site residues include His-288, Asp-305, and Cys-358.

Belongs to the peptidase C48 family.

The protein localises to the secreted. It is found in the host cell. Its subcellular location is the membrane. In terms of biological role, effector proteins function to alter host cell physiology and promote bacterial survival in host tissues. This protease possesses deubiquitinating and deneddylating activities. This Chlamydia trachomatis serovar A (strain ATCC VR-571B / DSM 19440 / HAR-13) protein is Deubiquitinase and deneddylase Dub1 (cdu1).